The primary structure comprises 156 residues: Transcriptional repressor NrdR (156 aa).

A zinc finger spans residues 3–34; it reads CPKCSSTHSRVVDSRHADDANAIRRRRECENC. The 91-residue stretch at 49-139 folds into the ATP-cone domain; sequence LIVVKKDGTR…VYKEFKDVDQ (91 aa).

The protein belongs to the NrdR family. The cofactor is Zn(2+).

In terms of biological role, negatively regulates transcription of bacterial ribonucleotide reductase nrd genes and operons by binding to NrdR-boxes. The sequence is that of Transcriptional repressor NrdR from Staphylococcus haemolyticus (strain JCSC1435).